The following is a 215-amino-acid chain: Cytochrome b6 (215 aa).

A helical transmembrane segment spans residues 32 to 52; the sequence is IFYCLGGITLTCFLIQFATGF. Cys35 contributes to the heme c binding site. Heme b-binding residues include His86 and His100. A run of 3 helical transmembrane segments spans residues 90-110, 116-136, and 186-206; these read ASMMVLMMILHVFRVYLTGGF, LTWVSGVILAVITVSFGVTGY, and AHTFVLPWLIAVFMLFHFLMI. 2 residues coordinate heme b: His187 and His202.

The protein belongs to the cytochrome b family. PetB subfamily. The 4 large subunits of the cytochrome b6-f complex are cytochrome b6, subunit IV (17 kDa polypeptide, PetD), cytochrome f and the Rieske protein, while the 4 small subunits are PetG, PetL, PetM and PetN. The complex functions as a dimer. Heme b serves as cofactor. The cofactor is heme c.

It is found in the cellular thylakoid membrane. Functionally, component of the cytochrome b6-f complex, which mediates electron transfer between photosystem II (PSII) and photosystem I (PSI), cyclic electron flow around PSI, and state transitions. This is Cytochrome b6 from Desmonostoc sp. (strain PCC 7906) (Nostoc sp. (strain PCC 7906)).